The chain runs to 279 residues: Cytochrome c1 (279 aa).

Positions 1-21 (MKKLLISAVSALVLGSGAAFA) are cleaved as a signal peptide. Heme c contacts are provided by cysteine 55, cysteine 58, histidine 59, and methionine 204. Residues 248 to 266 (MGLVAMVMLGLLSVMLYLT) traverse the membrane as a helical segment.

In terms of assembly, the main subunits of complex b-c1 are: cytochrome b, cytochrome c1 and the Rieske protein. Post-translationally, binds 1 heme c group covalently per subunit.

Its subcellular location is the cell membrane. Its function is as follows. Component of the ubiquinol-cytochrome c reductase complex (complex III or cytochrome b-c1 complex), which is a respiratory chain that generates an electrochemical potential coupled to ATP synthesis. c1 functions as an electron donor to cytochrome c. The chain is Cytochrome c1 (petC) from Rhodobacter capsulatus (strain ATCC BAA-309 / NBRC 16581 / SB1003).